The chain runs to 577 residues: Arginine--tRNA ligase (577 aa).

Positions 122 to 132 match the 'HIGH' region motif; sequence PNVAKEMHVGH.

The protein belongs to the class-I aminoacyl-tRNA synthetase family. In terms of assembly, monomer.

It localises to the cytoplasm. The enzyme catalyses tRNA(Arg) + L-arginine + ATP = L-arginyl-tRNA(Arg) + AMP + diphosphate. The protein is Arginine--tRNA ligase of Vibrio vulnificus (strain YJ016).